Here is a 68-residue protein sequence, read N- to C-terminus: Large ribosomal subunit protein bL33c (68 aa).

This sequence belongs to the bacterial ribosomal protein bL33 family.

The protein localises to the plastid. The protein resides in the chloroplast. The polypeptide is Large ribosomal subunit protein bL33c (Piper cenocladum (Ant piper)).